A 29-amino-acid polypeptide reads, in one-letter code: MISDTQIFVALILALFSFVLAIRLGTSLY.

Residues 7-26 (IFVALILALFSFVLAIRLGT) traverse the membrane as a helical segment.

This sequence belongs to the PsaM family.

It localises to the plastid. Its subcellular location is the chloroplast thylakoid membrane. The polypeptide is Photosystem I reaction center subunit XII (Guillardia theta (Cryptophyte)).